Here is a 110-residue protein sequence, read N- to C-terminus: Red pigment-concentrating prohormone (110 aa).

The N-terminal stretch at 1-25 is a signal peptide; it reads MVRRTGVTLLVVALVVVALVSSVSA. Residue glutamine 26 is modified to Pyrrolidone carboxylic acid. Tryptophan 33 is modified (tryptophan amide).

The protein belongs to the AKH/HRTH/RPCH family.

Its subcellular location is the secreted. Its function is as follows. This hormone adapts the animal to light backgrounds by stimulating concentration of the pigment of its red body-chromatophores. The polypeptide is Red pigment-concentrating prohormone (Carcinus maenas (Common shore crab)).